Reading from the N-terminus, the 326-residue chain is MAMTAAVKDELSRVDVPKPCCRRAEMAALLRFAGGLHIVSGRVVVEAELDTGAVARRLRREIAEVYGYPSEIHVLASGGLRKGSHFIVRVVKDGEFLARQTGLLDVRGRPVRGLPPHVVAANVCCAVSAWRGAFMAHGSLTEPGRSSALEITCPGPESALALVGAARRIGIAAKNREVRGVDRVVVKDGDAIAALLTRIGAHASVLAWEERRVRREVRATANRLANFDDANLRRSARAAVAAAARVTRALEILADDAPHHLTSAGRLRLEHRQASLEELGALADPPLTKDAIAGRIRRLLALADKRARDLGIPDTEAAVTPDMLVV.

A DNA-binding region (H-T-H motif) is located at residues 275–308 (SLEELGALADPPLTKDAIAGRIRRLLALADKRAR).

This sequence belongs to the WhiA family.

Involved in cell division and chromosome segregation. This chain is Probable cell division protein WhiA, found in Salinispora arenicola (strain CNS-205).